The primary structure comprises 88 residues: Small ribosomal subunit protein uS19 (88 aa).

This sequence belongs to the universal ribosomal protein uS19 family.

Its function is as follows. Protein S19 forms a complex with S13 that binds strongly to the 16S ribosomal RNA. This Mycoplasma capricolum subsp. capricolum (strain California kid / ATCC 27343 / NCTC 10154) protein is Small ribosomal subunit protein uS19 (rpsS).